The following is a 715-amino-acid chain: NADH-ubiquinone oxidoreductase chain 5 (715 aa).

17 helical membrane-spanning segments follow: residues 1 to 21 (MYLS…FFGR), 30 to 50 (LITC…FFEV), 81 to 101 (LTVA…IYSI), 119 to 139 (LFTF…MFVG), 140 to 160 (WEGV…RIAA), 177 to 197 (FLTI…YATV), 200 to 220 (LAPY…LIGA), 241 to 261 (TPVS…YLLM), 274 to 294 (LLLC…IGLF), 310 to 330 (LGMM…FHLI), 331 to 351 (NHAF…HAVA), 366 to 386 (LPLT…FPYM), 403 to 423 (FSFS…FTTL), 487 to 507 (GFFL…FGFI), 543 to 563 (TLFK…ALVL), 647 to 667 (IVTN…FTFI), and 668 to 688 (SLLE…LSLT).

The protein belongs to the complex I subunit 5 family.

The protein resides in the mitochondrion inner membrane. It catalyses the reaction a ubiquinone + NADH + 5 H(+)(in) = a ubiquinol + NAD(+) + 4 H(+)(out). Functionally, core subunit of the mitochondrial membrane respiratory chain NADH dehydrogenase (Complex I) that is believed to belong to the minimal assembly required for catalysis. Complex I functions in the transfer of electrons from NADH to the respiratory chain. The immediate electron acceptor for the enzyme is believed to be ubiquinone. The polypeptide is NADH-ubiquinone oxidoreductase chain 5 (ndh-5) (Neurospora crassa (strain ATCC 24698 / 74-OR23-1A / CBS 708.71 / DSM 1257 / FGSC 987)).